Here is a 143-residue protein sequence, read N- to C-terminus: Flagellar assembly factor FliW (143 aa).

The protein belongs to the FliW family. In terms of assembly, interacts with translational regulator CsrA and flagellin(s).

The protein localises to the cytoplasm. Its function is as follows. Acts as an anti-CsrA protein, binds CsrA and prevents it from repressing translation of its target genes, one of which is flagellin. Binds to flagellin and participates in the assembly of the flagellum. In Bacillus velezensis (strain DSM 23117 / BGSC 10A6 / LMG 26770 / FZB42) (Bacillus amyloliquefaciens subsp. plantarum), this protein is Flagellar assembly factor FliW.